The following is a 310-amino-acid chain: Nodulation protein D 1 (310 aa).

Residues Leu-6–Thr-63 form the HTH lysR-type domain. Positions Leu-23–Ala-42 form a DNA-binding region, H-T-H motif.

The protein belongs to the LysR transcriptional regulatory family.

Its function is as follows. NodD regulates the expression of the nodABCFE genes which encode other nodulation proteins. NodD is also a negative regulator of its own expression. Binds flavonoids as inducers. The chain is Nodulation protein D 1 (nodD1) from Neorhizobium galegae (Rhizobium galegae).